The following is a 157-amino-acid chain: SsrA-binding protein (157 aa).

Residues 133 to 157 (LHDKRESEKKRDWGREKGRLLRARG) form a disordered region. Residues 135 to 151 (DKRESEKKRDWGREKGR) are compositionally biased toward basic and acidic residues.

This sequence belongs to the SmpB family.

It localises to the cytoplasm. Its function is as follows. Required for rescue of stalled ribosomes mediated by trans-translation. Binds to transfer-messenger RNA (tmRNA), required for stable association of tmRNA with ribosomes. tmRNA and SmpB together mimic tRNA shape, replacing the anticodon stem-loop with SmpB. tmRNA is encoded by the ssrA gene; the 2 termini fold to resemble tRNA(Ala) and it encodes a 'tag peptide', a short internal open reading frame. During trans-translation Ala-aminoacylated tmRNA acts like a tRNA, entering the A-site of stalled ribosomes, displacing the stalled mRNA. The ribosome then switches to translate the ORF on the tmRNA; the nascent peptide is terminated with the 'tag peptide' encoded by the tmRNA and targeted for degradation. The ribosome is freed to recommence translation, which seems to be the essential function of trans-translation. The chain is SsrA-binding protein from Nitrobacter winogradskyi (strain ATCC 25391 / DSM 10237 / CIP 104748 / NCIMB 11846 / Nb-255).